Here is a 175-residue protein sequence, read N- to C-terminus: Small ribosomal subunit protein bS16 (175 aa).

It belongs to the bacterial ribosomal protein bS16 family.

The sequence is that of Small ribosomal subunit protein bS16 from Cytophaga hutchinsonii (strain ATCC 33406 / DSM 1761 / CIP 103989 / NBRC 15051 / NCIMB 9469 / D465).